The chain runs to 167 residues: Calcium-binding protein CML19 (167 aa).

EF-hand domains are found at residues 23–58 (QKRR…LGFE), 59–94 (MNNQ…KFGE), 96–131 (DSID…LGEN), and 132–167 (FTDN…TSYG). Residues aspartate 36, aspartate 38, serine 40, serine 42, glutamate 47, aspartate 72, asparagine 74, serine 76, glutamate 83, aspartate 109, aspartate 111, asparagine 113, lysine 115, aspartate 120, aspartate 145, aspartate 147, aspartate 149, glutamate 151, and glutamate 156 each contribute to the Ca(2+) site.

Belongs to the centrin family. As to quaternary structure, interacts with RAD4. Calcium is required for this interaction. Interacts with SAC3B. Expressed in leaves, roots, and at lower level in stems. Barely detectable in flower buds and flowers.

The protein resides in the cytoplasm. Its subcellular location is the nucleus. Its function is as follows. Potential calcium sensor that binds calcium in vitro. Modulates homologous recombination and nucleotide excision repair (NER). Involved in the early response to UV irradiation. The polypeptide is Calcium-binding protein CML19 (Arabidopsis thaliana (Mouse-ear cress)).